The following is a 157-amino-acid chain: Endoribonuclease YbeY (157 aa).

Zn(2+)-binding residues include H122, H126, and H132.

This sequence belongs to the endoribonuclease YbeY family. The cofactor is Zn(2+).

Its subcellular location is the cytoplasm. Single strand-specific metallo-endoribonuclease involved in late-stage 70S ribosome quality control and in maturation of the 3' terminus of the 16S rRNA. This chain is Endoribonuclease YbeY, found in Lysinibacillus sphaericus (strain C3-41).